The sequence spans 226 residues: 7-cyano-7-deazaguanine synthase (226 aa).

Position 7–17 (7–17 (ISGGMDSLVVA)) interacts with ATP. Zn(2+) is bound by residues C187, C195, C198, and C201.

This sequence belongs to the QueC family. It depends on Zn(2+) as a cofactor.

It carries out the reaction 7-carboxy-7-deazaguanine + NH4(+) + ATP = 7-cyano-7-deazaguanine + ADP + phosphate + H2O + H(+). Its pathway is purine metabolism; 7-cyano-7-deazaguanine biosynthesis. Functionally, catalyzes the ATP-dependent conversion of 7-carboxy-7-deazaguanine (CDG) to 7-cyano-7-deazaguanine (preQ(0)). The protein is 7-cyano-7-deazaguanine synthase of Chlorobium phaeobacteroides (strain BS1).